We begin with the raw amino-acid sequence, 118 residues long: Small ribosomal subunit protein uS13 (118 aa).

Positions 94–118 (SLPLRGQRTKTNARTRKGPRKPIKK) are disordered.

This sequence belongs to the universal ribosomal protein uS13 family. As to quaternary structure, part of the 30S ribosomal subunit. Forms a loose heterodimer with protein S19. Forms two bridges to the 50S subunit in the 70S ribosome.

In terms of biological role, located at the top of the head of the 30S subunit, it contacts several helices of the 16S rRNA. In the 70S ribosome it contacts the 23S rRNA (bridge B1a) and protein L5 of the 50S subunit (bridge B1b), connecting the 2 subunits; these bridges are implicated in subunit movement. Contacts the tRNAs in the A and P-sites. The polypeptide is Small ribosomal subunit protein uS13 (Alteromonas mediterranea (strain DSM 17117 / CIP 110805 / LMG 28347 / Deep ecotype)).